Consider the following 462-residue polypeptide: UPF0236 protein TTE2489 (462 aa).

It belongs to the UPF0236 family.

The polypeptide is UPF0236 protein TTE2489 (Caldanaerobacter subterraneus subsp. tengcongensis (strain DSM 15242 / JCM 11007 / NBRC 100824 / MB4) (Thermoanaerobacter tengcongensis)).